A 34-amino-acid polypeptide reads, in one-letter code: Cytochrome b6-f complex subunit 8 (34 aa).

Residues 3–23 (LLTFGWAALLAVFTFSLAMVV) form a helical membrane-spanning segment.

This sequence belongs to the PetN family. In terms of assembly, the 4 large subunits of the cytochrome b6-f complex are cytochrome b6, subunit IV (17 kDa polypeptide, PetD), cytochrome f and the Rieske protein, while the 4 small subunits are PetG, PetL, PetM and PetN. The complex functions as a dimer.

The protein resides in the cellular thylakoid membrane. In terms of biological role, component of the cytochrome b6-f complex, which mediates electron transfer between photosystem II (PSII) and photosystem I (PSI), cyclic electron flow around PSI, and state transitions. The chain is Cytochrome b6-f complex subunit 8 from Synechococcus elongatus (strain ATCC 33912 / PCC 7942 / FACHB-805) (Anacystis nidulans R2).